A 284-amino-acid polypeptide reads, in one-letter code: Acetyl-coenzyme A carboxylase carboxyl transferase subunit beta (284 aa).

The CoA carboxyltransferase N-terminal domain maps to 25–284 (MWVKCPGCSA…ILGILYRPAA (260 aa)). Positions 29, 32, 48, and 51 each coordinate Zn(2+). A C4-type zinc finger spans residues 29 to 51 (CPGCSATLLAKDLDANLNVCPTC).

This sequence belongs to the AccD/PCCB family. Acetyl-CoA carboxylase is a heterohexamer composed of biotin carboxyl carrier protein (AccB), biotin carboxylase (AccC) and two subunits each of ACCase subunit alpha (AccA) and ACCase subunit beta (AccD). It depends on Zn(2+) as a cofactor.

It is found in the cytoplasm. The catalysed reaction is N(6)-carboxybiotinyl-L-lysyl-[protein] + acetyl-CoA = N(6)-biotinyl-L-lysyl-[protein] + malonyl-CoA. Its pathway is lipid metabolism; malonyl-CoA biosynthesis; malonyl-CoA from acetyl-CoA: step 1/1. Functionally, component of the acetyl coenzyme A carboxylase (ACC) complex. Biotin carboxylase (BC) catalyzes the carboxylation of biotin on its carrier protein (BCCP) and then the CO(2) group is transferred by the transcarboxylase to acetyl-CoA to form malonyl-CoA. In Pelobacter propionicus (strain DSM 2379 / NBRC 103807 / OttBd1), this protein is Acetyl-coenzyme A carboxylase carboxyl transferase subunit beta.